The primary structure comprises 1187 residues: MRNHCLELSSNCSSIFASSKSNPRFSPSKLSYSTFFSRSAIYYRSKPKQASSSSSFSTFPPCLNRKSSLTHVLKPVSELADTTTKPFSPEIVGKRTDLKKIMILGAGPIVIGQACEFDYSGTQACKALREEGYEVILINSNPATIMTDPETANRTYIAPMTPELVEQVIEKERPDALLPTMGGQTALNLAVALAESGALEKYGVELIGAKLGAIKKAEDRELFKDAMKNIGLKTPPSGIGTTLDECFDIAEKIGEFPLIIRPAFTLGGTGGGIAYNKEEFESICKSGLAASATSQVLVEKSLLGWKEYELEVMRDLADNVVIICSIENIDPMGVHTGDSITVAPAQTLTDREYQRLRDYSIAIIREIGVECGGSNVQFAVNPVDGEVMIIEMNPRVSRSSALASKATGFPIAKMAAKLSVGYTLDQIPNDITRKTPASFEPSIDYVVTKIPRFAFEKFPGSQPLLTTQMKSVGESMALGRTFQESFQKALRSLECGFSGWGCAKIKELDWDWDQLKYSLRVPNPDRIHAIYAAMKKGMKIDEIYELSMVDKWFLTQLKELVDVEQYLMSGTLSEITKEDLYEVKKRGFSDKQIAFATKTTEEEVRTKRISLGVVPSYKRVDTCAAEFEAHTPYMYSSYDVECESAPNNKKKVLILGGGPNRIGQGIEFDYCCCHTSFALQDAGYETIMLNSNPETVSTDYDTSDRLYFEPLTIEDVLNVIDLEKPDGIIVQFGGQTPLKLALPIKHYLDKHMPMSLSGAGPVRIWGTSPDSIDAAEDRERFNAILDELKIEQPKGGIAKSEADALAIAKEVGYPVVVRPSYVLGGRAMEIVYDDSRLITYLENAVQVDPERPVLVDKYLSDAIEIDVDTLTDSYGNVVIGGIMEHIEQAGVHSGDSACMLPTQTIPASCLQTIRTWTTKLAKKLNVCGLMNCQYAITTSGDVFLLEANPRASRTVPFVSKAIGHPLAKYAALVMSGKSLKDLNFEKEVIPKHVSVKEAVFPFEKFQGCDVILGPEMRSTGEVMSISSEFSSAFAMAQIAAGQKLPLSGTVFLSLNDMTKPHLEKIAVSFLELGFKIVATSGTAHFLELKGIPVERVLKLHEGRPHAADMVANGQIHLMLITSSGDALDQKDGRQLRQMALAYKVPVITTVAGALATAEGIKSLKSSAIKMTALQDFFEVKNVSSLLV.

A chloroplast-targeting transit peptide spans 1–62; sequence MRNHCLELSS…SSSFSTFPPC (62 aa). Residues 93 to 494 are carboxyphosphate synthetic domain; that stretch reads GKRTDLKKIM…SFQKALRSLE (402 aa). ATP is bound by residues Arg220, Arg261, Gly267, Gly268, Lys300, Leu302, Glu307, Gly333, Val334, His335, Gln377, and Glu391. In terms of domain architecture, ATP-grasp 1 spans 224 to 420; that stretch reads KDAMKNIGLK…IAKMAAKLSV (197 aa). 3 residues coordinate Mg(2+): Gln377, Glu391, and Asn393. The tract at residues 495-644 is oligomerization domain; it reads CGFSGWGCAK…YSSYDVECES (150 aa). A carbamoyl phosphate synthetic domain region spans residues 645-1040; it reads APNNKKKVLI…SAFAMAQIAA (396 aa). Residues 782 to 975 enclose the ATP-grasp 2 domain; sequence NAILDELKIE…LAKYAALVMS (194 aa). Residues Arg818, Lys857, Leu859, Glu864, Gly890, Val891, His892, Ser893, Gln933, and Glu946 each contribute to the ATP site. 3 residues coordinate Mg(2+): Gln933, Glu946, and Asn948. Residues 1041–1187 form an allosteric domain region; it reads GQKLPLSGTV…EVKNVSSLLV (147 aa). The 142-residue stretch at 1042–1183 folds into the MGS-like domain; sequence QKLPLSGTVF…QDFFEVKNVS (142 aa).

Belongs to the CarB family. In terms of assembly, heterodimer composed of 2 chains; the small (or glutamine) chain promotes the hydrolysis of glutamine to ammonia, which is used by the large (or ammonia) chain to synthesize carbamoyl phosphate. Mg(2+) is required as a cofactor. The cofactor is Mn(2+). As to expression, expressed in roots and leaves.

The protein localises to the plastid. It localises to the chloroplast. The catalysed reaction is hydrogencarbonate + L-glutamine + 2 ATP + H2O = carbamoyl phosphate + L-glutamate + 2 ADP + phosphate + 2 H(+). It carries out the reaction hydrogencarbonate + NH4(+) + 2 ATP = carbamoyl phosphate + 2 ADP + phosphate + 2 H(+). It functions in the pathway amino-acid biosynthesis; L-arginine biosynthesis; carbamoyl phosphate from bicarbonate: step 1/1. Large subunit of the arginine-specific carbamoyl phosphate synthase (CPSase). CPSase catalyzes the formation of carbamoyl phosphate from the ammonia moiety of glutamine, hydrogencarbonate, and phosphate donated by ATP, constituting the first step of 2 biosynthetic pathways, one leading to arginine and/or urea and the other to pyrimidine nucleotides. The large subunit (synthetase) binds the substrates ammonia (free or transferred from glutamine from the small subunit), hydrogencarbonate and ATP and carries out an ATP-coupled ligase reaction, activating hydrogencarbonate by forming carboxy phosphate which reacts with ammonia to form carbamoyl phosphate. Required for mesophyll development. This is Carbamoyl phosphate synthase arginine-specific large chain, chloroplastic (CARB) from Arabidopsis thaliana (Mouse-ear cress).